Here is a 530-residue protein sequence, read N- to C-terminus: Netrin-G2 (530 aa).

Positions 1–17 (MLHLLALFLHCLPLASG) are cleaved as a signal peptide. Intrachain disulfides connect C22/C39, C61/C81, and C69/C77. The Laminin N-terminal domain occupies 35-286 (EFYACQPKVM…AISNIEVIGR (252 aa)). Positions 69–88 (CSHENPYLCSNECDASNPDL) are NGL discriminant loop I. Residues N122 and N128 are each glycosylated (N-linked (GlcNAc...) asparagine). C171 and C195 are disulfide-bonded. An NGL discriminant loop II region spans residues 201-203 (RWA). Positions 264–267 (TYVQ) are NGL discriminant loop III. Cystine bridges form between C287/C296, C289/C305, C307/C316, C319/C344, C353/C362, C355/C373, C376/C385, C388/C406, C409/C421, C411/C427, C429/C438, C441/C451, C456/C469, C463/C475, and C477/C486. 3 consecutive Laminin EGF-like domains span residues 287–346 (CKCN…ACAT), 353–408 (CECY…VCIE), and 409–453 (CNCN…GCYP). An N-linked (GlcNAc...) asparagine glycan is attached at N310. Residue N395 is glycosylated (N-linked (GlcNAc...) asparagine). N-linked (GlcNAc...) asparagine glycosylation is present at N422. G507 is lipidated: GPI-anchor amidated glycine. The propeptide at 508-530 (AAPRPATLLGCLLLLGLAARLGR) is removed in mature form.

In terms of assembly, interacts with LRRC4. N-glycosylated.

Its subcellular location is the cell membrane. Its function is as follows. Involved in controlling patterning and neuronal circuit formation at the laminar, cellular, subcellular and synaptic levels. Promotes neurite outgrowth of both axons and dendrites. The chain is Netrin-G2 from Homo sapiens (Human).